Consider the following 598-residue polypeptide: NADH-quinone oxidoreductase subunit C/D (598 aa).

The segment at 1–189 (MTDSTTHDRE…DPFELTRQKQ (189 aa)) is NADH dehydrogenase I subunit C. The interval 213–598 (DFMFLNLGPN…IDFVMSDVDR (386 aa)) is NADH dehydrogenase I subunit D.

It in the N-terminal section; belongs to the complex I 30 kDa subunit family. The protein in the C-terminal section; belongs to the complex I 49 kDa subunit family. As to quaternary structure, NDH-1 is composed of 13 different subunits. Subunits NuoB, CD, E, F, and G constitute the peripheral sector of the complex.

Its subcellular location is the cell inner membrane. The enzyme catalyses a quinone + NADH + 5 H(+)(in) = a quinol + NAD(+) + 4 H(+)(out). NDH-1 shuttles electrons from NADH, via FMN and iron-sulfur (Fe-S) centers, to quinones in the respiratory chain. The immediate electron acceptor for the enzyme in this species is believed to be ubiquinone. Couples the redox reaction to proton translocation (for every two electrons transferred, four hydrogen ions are translocated across the cytoplasmic membrane), and thus conserves the redox energy in a proton gradient. This is NADH-quinone oxidoreductase subunit C/D from Edwardsiella ictaluri (strain 93-146).